A 427-amino-acid polypeptide reads, in one-letter code: Serine--tRNA ligase (427 aa).

231-233 contributes to the L-serine binding site; sequence TAE. 262 to 264 contacts ATP; it reads RSE. E285 lines the L-serine pocket. Position 349-352 (349-352) interacts with ATP; that stretch reads EISS. S385 contacts L-serine.

The protein belongs to the class-II aminoacyl-tRNA synthetase family. Type-1 seryl-tRNA synthetase subfamily. As to quaternary structure, homodimer. The tRNA molecule binds across the dimer.

Its subcellular location is the cytoplasm. It carries out the reaction tRNA(Ser) + L-serine + ATP = L-seryl-tRNA(Ser) + AMP + diphosphate + H(+). It catalyses the reaction tRNA(Sec) + L-serine + ATP = L-seryl-tRNA(Sec) + AMP + diphosphate + H(+). It functions in the pathway aminoacyl-tRNA biosynthesis; selenocysteinyl-tRNA(Sec) biosynthesis; L-seryl-tRNA(Sec) from L-serine and tRNA(Sec): step 1/1. Catalyzes the attachment of serine to tRNA(Ser). Is also able to aminoacylate tRNA(Sec) with serine, to form the misacylated tRNA L-seryl-tRNA(Sec), which will be further converted into selenocysteinyl-tRNA(Sec). This is Serine--tRNA ligase from Sinorhizobium medicae (strain WSM419) (Ensifer medicae).